Here is a 164-residue protein sequence, read N- to C-terminus: Large ribosomal subunit protein uL10 (164 aa).

It belongs to the universal ribosomal protein uL10 family. In terms of assembly, part of the ribosomal stalk of the 50S ribosomal subunit. The N-terminus interacts with L11 and the large rRNA to form the base of the stalk. The C-terminus forms an elongated spine to which L12 dimers bind in a sequential fashion forming a multimeric L10(L12)X complex.

Its function is as follows. Forms part of the ribosomal stalk, playing a central role in the interaction of the ribosome with GTP-bound translation factors. The chain is Large ribosomal subunit protein uL10 from Photobacterium profundum (strain SS9).